Here is a 241-residue protein sequence, read N- to C-terminus: Nicotinamide riboside kinase (241 aa).

An ATP-binding site is contributed by 21–29 (GCSSSGKST). The Mg(2+) site is built by Ser28 and Asp47. Asp47 serves as the catalytic Proton acceptor. Substrate is bound by residues 47 to 50 (DDFY), 67 to 68 (WD), and Asp68. Position 163 (Arg163) interacts with ATP. A substrate-binding site is contributed by Arg164. Residues Arg167, 167 to 169 (RGG), and 213 to 215 (DVQ) contribute to the ATP site. 169–170 (GY) is a binding site for substrate.

Belongs to the uridine kinase family. NRK subfamily.

The catalysed reaction is beta-nicotinamide D-riboside + ATP = beta-nicotinamide D-ribonucleotide + ADP + H(+). The enzyme catalyses beta-D-ribosylnicotinate + ATP = nicotinate beta-D-ribonucleotide + ADP + H(+). Its pathway is cofactor biosynthesis; NAD(+) biosynthesis. Functionally, catalyzes the phosphorylation of nicotinamide riboside (NR) and nicotinic acid riboside (NaR) to form nicotinamide mononucleotide (NMN) and nicotinic acid mononucleotide (NaMN). The polypeptide is Nicotinamide riboside kinase (NRK1) (Eremothecium gossypii (strain ATCC 10895 / CBS 109.51 / FGSC 9923 / NRRL Y-1056) (Yeast)).